Reading from the N-terminus, the 268-residue chain is Interleukin-1 alpha (268 aa).

Residues 1–112 constitute a propeptide that is removed on maturation; it reads MAKVPDLFED…DTEEEIIKPR (112 aa). Lys-82 is modified (N6-acetyllysine). The segment at 82–86 is nuclear localization signal (NLS); the sequence is KKRRL. At Ser-87 the chain carries Phosphoserine. N-linked (GlcNAc...) asparagine glycosylation is found at Asn-102 and Asn-141.

Belongs to the IL-1 family. In terms of assembly, monomer. Interacts with TMED10; the interaction mediates the translocation from the cytoplasm into the ERGIC (endoplasmic reticulum-Golgi intermediate compartment) and thereby secretion. Interacts with IL1R1. Interacts with S100A13; this interaction is the first step in the export of IL1A, followed by direct translocation of this complex across the plasma membrane. Acetylated within its nuclear localization sequence, which impacts subcellular localization. Post-translationally, proteolytic processed by CAPN1 in a calcium-dependent manner. Cleavage from 31 kDa precursor to 18 kDa biologically active molecules. In terms of processing, phosphorylated. Phosphorylation greatly enhances susceptibility to digestion and promotes the conversion of pre-IL1A alpha to the biologically active IL1A.

The protein resides in the nucleus. It is found in the cytoplasm. It localises to the secreted. Functionally, cytokine constitutively present intracellularly in nearly all resting non-hematopoietic cells that plays an important role in inflammation and bridges the innate and adaptive immune systems. After binding to its receptor IL1R1 together with its accessory protein IL1RAP, forms the high affinity interleukin-1 receptor complex. Signaling involves the recruitment of adapter molecules such as MYD88, IRAK1 or IRAK4. In turn, mediates the activation of NF-kappa-B and the three MAPK pathways p38, p42/p44 and JNK pathways. Within the cell, acts as an alarmin and cell death results in its liberation in the extracellular space after disruption of the cell membrane to induce inflammation and alert the host to injury or damage. In addition to its role as a danger signal, which occurs when the cytokine is passively released by cell necrosis, directly senses DNA damage and acts as signal for genotoxic stress without loss of cell integrity. This Lama glama (Llama) protein is Interleukin-1 alpha (IL1A).